A 236-amino-acid chain; its full sequence is UPF0502 protein Bcen2424_5610 (236 aa).

The protein belongs to the UPF0502 family.

The polypeptide is UPF0502 protein Bcen2424_5610 (Burkholderia cenocepacia (strain HI2424)).